Here is a 533-residue protein sequence, read N- to C-terminus: NEDD8-activating enzyme E1 regulatory subunit (533 aa).

An interaction with uba3 region spans residues 330–343 (DMIADSDKFIKLQN).

The protein belongs to the ubiquitin-activating E1 family. ULA1 subfamily. In terms of assembly, heterodimer of uba3 and nae1. The complex binds nedd8 and ube2m.

It functions in the pathway protein modification; protein neddylation. Its function is as follows. Regulatory subunit of the dimeric uba3-nae1 E1 enzyme. E1 activates nedd8 by first adenylating its C-terminal glycine residue with ATP, thereafter linking this residue to the side chain of the catalytic cysteine, yielding a nedd8-uba3 thioester and free AMP. E1 finally transfers nedd8 to the catalytic cysteine of ube2m. The covalent attachment of nedd8 to target proteins is known as 'neddylation' and the process is involved in the regulation of cell growth, viability and development. This Danio rerio (Zebrafish) protein is NEDD8-activating enzyme E1 regulatory subunit (nae1).